A 63-amino-acid polypeptide reads, in one-letter code: Beta-defensin 4 (63 aa).

An N-terminal signal peptide occupies residues 1–22 (MRIHYLLFSFLLVLLSPLSAFT). Gln-23 carries the pyrrolidone carboxylic acid modification. Cystine bridges form between Cys-31–Cys-59, Cys-38–Cys-52, and Cys-42–Cys-60.

The protein belongs to the beta-defensin family. As to expression, highly expressed in lung.

It is found in the secreted. In terms of biological role, exhibits antimicrobial activity against Gram-negative bacteria and Gram-positive bacteria. May act as a ligand for C-C chemokine receptor CCR6. Binds to CCR6 and induces chemotactic activity of CCR6-expressing cells. This chain is Beta-defensin 4 (Defb4), found in Rattus norvegicus (Rat).